We begin with the raw amino-acid sequence, 353 residues long: ATP-dependent kinase YFH7 (353 aa).

31–39 (GSPGSGKST) is a binding site for ATP.

This sequence belongs to the YFH7 family.

Functionally, ATP-dependent kinase that could be involved in endoplasmic reticulum membrane assembly. The chain is ATP-dependent kinase YFH7 (YFH7) from Saccharomyces cerevisiae (strain RM11-1a) (Baker's yeast).